The sequence spans 671 residues: Oviduct-specific glycoprotein (671 aa).

The first 21 residues, 1 to 21, serve as a signal peptide directing secretion; the sequence is MGRLLLWVGLVLLMKPNDGTA. The region spanning 22 to 385 is the GH18 domain; sequence YKLVCYFTNW…HILNELLVRA (364 aa). A disulfide bridge connects residues Cys-26 and Cys-51. Chitin-binding positions include 71–72, 98–101, Tyr-142, 211–214, and Trp-355; these read LQ, GGWN, and LSYD. Residue Asn-402 is glycosylated (N-linked (GlcNAc...) asparagine). 8 repeat units span residues 490–504, 505–519, 520–534, 535–549, 550–564, 565–579, 580–594, and 595–609. The segment at 490–609 is 8 X 15 AA tandem repeats; that stretch reads TGMTVTVQTQ…GSQSVTPPGM (120 aa). Asn-511, Asn-526, Asn-541, Asn-556, Asn-571, and Asn-586 each carry an N-linked (GlcNAc...) asparagine glycan.

This sequence belongs to the glycosyl hydrolase 18 family. In terms of processing, highly O-glycosylated and also N-glycosylated. Oviduct.

Its subcellular location is the cytoplasmic vesicle. The protein resides in the secretory vesicle. Binds to oocyte zona pellucida in vivo. May play a role in the fertilization process and/or early embryonic development. Might act as a protective secretion influencing the first steps of the reproductive process necessary for the normal triggering of fertilization and early embryonic development. The sequence is that of Oviduct-specific glycoprotein (OVGP1) from Mesocricetus auratus (Golden hamster).